Consider the following 385-residue polypeptide: SWI/SNF-related matrix-associated actin-dependent regulator of chromatin subfamily B member 1 (385 aa).

The interval 1 to 113 is DNA-binding; it reads MMMMALSKTF…DEKYKAVSIS (113 aa). Residues lysine 106, lysine 108, and lysine 124 each participate in a glycyl lysine isopeptide (Lys-Gly) (interchain with G-Cter in SUMO2) cross-link. Position 129 is a phosphoserine (serine 129). Lysine 161 participates in a covalent cross-link: Glycyl lysine isopeptide (Lys-Gly) (interchain with G-Cter in SUMO2). Positions 183–243 are HIV-1 integrase-binding; sequence PEVLVPIRLD…VPAIASAIRQ (61 aa). 2 consecutive repeat copies span residues 186 to 245 and 259 to 319. The segment at 186 to 245 is MYC-binding; it reads LVPIRLDMEIDGQKLRDAFTWNMNEKLMTPEMFSEILCDDLDLNPLTFVPAIASAIRQQI. The 2 X approximate tandem repeats stretch occupies residues 186–319; it reads LVPIRLDMEI…TIAYSIRGQL (134 aa). An interaction with PPP1R15A region spans residues 304 to 318; that stretch reads GGEFVTTIAYSIRGQ.

Belongs to the SNF5 family. Component of the multiprotein chromatin-remodeling complexes SWI/SNF: SWI/SNF-A (BAF), SWI/SNF-B (PBAF) and related complexes. The canonical complex contains a catalytic subunit (either SMARCA4/BRG1/BAF190A or SMARCA2/BRM/BAF190B) and at least SMARCE1, ACTL6A/BAF53, SMARCC1/BAF155, SMARCC2/BAF170, and SMARCB1/SNF5/BAF47. Other subunits specific to each of the complexes may also be present permitting several possible combinations developmentally and tissue specific. Component of the BAF complex, which includes at least actin (ACTB), ARID1A/BAF250A, ARID1B/BAF250B, SMARCA2/BRM, SMARCA4/BRG1/BAF190A, ACTL6A/BAF53, ACTL6B/BAF53B, SMARCE1/BAF57 SMARCC1/BAF155, SMARCC2/BAF170, SMARCB1/SNF5/INI1, and one or more SMARCD1/BAF60A, SMARCD2/BAF60B, or SMARCD3/BAF60C. In muscle cells, the BAF complex also contains DPF3. Component of neural progenitors-specific chromatin remodeling complex (npBAF complex) composed of at least, ARID1A/BAF250A or ARID1B/BAF250B, SMARCD1/BAF60A, SMARCD3/BAF60C, SMARCA2/BRM/BAF190B, SMARCA4/BRG1/BAF190A, SMARCB1/BAF47, SMARCC1/BAF155, SMARCE1/BAF57, SMARCC2/BAF170, PHF10/BAF45A, ACTL6A/BAF53A and actin. Component of neuron-specific chromatin remodeling complex (nBAF complex) composed of at least, ARID1A/BAF250A or ARID1B/BAF250B, SMARCD1/BAF60A, SMARCD3/BAF60C, SMARCA2/BRM/BAF190B, SMARCA4/BRG1/BAF190A, SMARCB1/BAF47, SMARCC1/BAF155, SMARCE1/BAF57, SMARCC2/BAF170, DPF1/BAF45B, DPF3/BAF45C, ACTL6B/BAF53B and actin. Component of the SWI/SNF-B (PBAF) chromatin remodeling complex, at least composed of SMARCA4/BRG1, SMARCB1/BAF47/SNF5, ACTL6A/BAF53A or ACTL6B/BAF53B, SMARCE1/BAF57, SMARCD1/BAF60A, SMARCD2/BAF60B, perhaps SMARCD3/BAF60C, SMARCC1/BAF155, SMARCC2/BAF170, PBRM1/BAF180, ARID2/BAF200 and actin. Binds to double-stranded DNA. Interacts with CEBPB (when not methylated). Interacts with PIH1D1. Interacts with MYK and MAEL. Interacts with PPP1R15A. Interacts with DPF2. Interacts with YWHAZ. Interacts with ERCC6. Interacts with FOS, FOSB isoform 1 and 2, FOSL1 and FOSL2. In terms of assembly, (Microbial infection) Binds tightly to the human immunodeficiency virus-type 1 (HIV-1) integrase in vitro and stimulates its DNA-joining activity. Interacts with human papillomavirus 18 E1 protein to stimulate its viral replication. Interacts with Epstein-Barr virus protein EBNA-2.

The protein localises to the nucleus. Core component of the BAF (hSWI/SNF) complex. This ATP-dependent chromatin-remodeling complex plays important roles in cell proliferation and differentiation, in cellular antiviral activities and inhibition of tumor formation. The BAF complex is able to create a stable, altered form of chromatin that constrains fewer negative supercoils than normal. This change in supercoiling would be due to the conversion of up to one-half of the nucleosomes on polynucleosomal arrays into asymmetric structures, termed altosomes, each composed of 2 histones octamers. Stimulates in vitro the remodeling activity of SMARCA4/BRG1/BAF190A. Involved in activation of CSF1 promoter. Belongs to the neural progenitors-specific chromatin remodeling complex (npBAF complex) and the neuron-specific chromatin remodeling complex (nBAF complex). During neural development a switch from a stem/progenitor to a postmitotic chromatin remodeling mechanism occurs as neurons exit the cell cycle and become committed to their adult state. The transition from proliferating neural stem/progenitor cells to postmitotic neurons requires a switch in subunit composition of the npBAF and nBAF complexes. As neural progenitors exit mitosis and differentiate into neurons, npBAF complexes which contain ACTL6A/BAF53A and PHF10/BAF45A, are exchanged for homologous alternative ACTL6B/BAF53B and DPF1/BAF45B or DPF3/BAF45C subunits in neuron-specific complexes (nBAF). The npBAF complex is essential for the self-renewal/proliferative capacity of the multipotent neural stem cells. The nBAF complex along with CREST plays a role regulating the activity of genes essential for dendrite growth. Plays a key role in cell-cycle control and causes cell cycle arrest in G0/G1. This is SWI/SNF-related matrix-associated actin-dependent regulator of chromatin subfamily B member 1 (SMARCB1) from Homo sapiens (Human).